The following is a 383-amino-acid chain: L-lactate dehydrogenase (383 aa).

Residues 1–380 (MIVSSTTDFR…NETILAERVP (380 aa)) enclose the FMN hydroxy acid dehydrogenase domain. Residue tyrosine 24 participates in substrate binding. Serine 106 and glutamine 127 together coordinate FMN. Tyrosine 129 contributes to the substrate binding site. Threonine 155 lines the FMN pocket. A substrate-binding site is contributed by arginine 164. Lysine 251 contacts FMN. Histidine 275 functions as the Proton acceptor in the catalytic mechanism. Arginine 278 provides a ligand contact to substrate. 306–330 (DGGVRSGLDVVRMLALGARGVLIGR) is a binding site for FMN.

Belongs to the FMN-dependent alpha-hydroxy acid dehydrogenase family. The cofactor is FMN.

The protein resides in the cell inner membrane. The enzyme catalyses (S)-lactate + A = pyruvate + AH2. Its function is as follows. Catalyzes the conversion of L-lactate to pyruvate. Is coupled to the respiratory chain. The chain is L-lactate dehydrogenase from Caulobacter vibrioides (strain ATCC 19089 / CIP 103742 / CB 15) (Caulobacter crescentus).